A 431-amino-acid chain; its full sequence is 3-phosphoshikimate 1-carboxyvinyltransferase (431 aa).

Positions 26, 27, and 31 each coordinate 3-phosphoshikimate. Lys26 is a binding site for phosphoenolpyruvate. The phosphoenolpyruvate site is built by Gly100 and Arg129. Residues Ser175, Ser176, Gln177, Asp308, and Gln335 each contribute to the 3-phosphoshikimate site. Phosphoenolpyruvate is bound at residue Gln177. The Proton acceptor role is filled by Asp308. Arg339, Arg381, and Lys412 together coordinate phosphoenolpyruvate.

The protein belongs to the EPSP synthase family. As to quaternary structure, monomer.

The protein localises to the cytoplasm. The enzyme catalyses 3-phosphoshikimate + phosphoenolpyruvate = 5-O-(1-carboxyvinyl)-3-phosphoshikimate + phosphate. It participates in metabolic intermediate biosynthesis; chorismate biosynthesis; chorismate from D-erythrose 4-phosphate and phosphoenolpyruvate: step 6/7. Functionally, catalyzes the transfer of the enolpyruvyl moiety of phosphoenolpyruvate (PEP) to the 5-hydroxyl of shikimate-3-phosphate (S3P) to produce enolpyruvyl shikimate-3-phosphate and inorganic phosphate. The polypeptide is 3-phosphoshikimate 1-carboxyvinyltransferase (Opitutus terrae (strain DSM 11246 / JCM 15787 / PB90-1)).